The primary structure comprises 758 residues: 5-methyltetrahydropteroyltriglutamate--homocysteine methyltransferase (758 aa).

5-methyltetrahydropteroyltri-L-glutamate is bound by residues 16 to 19 and Lys112; that span reads RELK. Residues 433 to 435 and Glu486 contribute to the L-homocysteine site; that span reads IGS. L-methionine is bound by residues 433–435 and Glu486; that span reads IGS. 5-methyltetrahydropteroyltri-L-glutamate is bound by residues 517–518 and Trp563; that span reads RC. Asp601 serves as a coordination point for L-homocysteine. Asp601 serves as a coordination point for L-methionine. Glu607 is a binding site for 5-methyltetrahydropteroyltri-L-glutamate. Zn(2+)-binding residues include His643, Cys645, and Glu667. Catalysis depends on His696, which acts as the Proton donor. Cys728 serves as a coordination point for Zn(2+).

Belongs to the vitamin-B12 independent methionine synthase family. Zn(2+) is required as a cofactor.

It catalyses the reaction 5-methyltetrahydropteroyltri-L-glutamate + L-homocysteine = tetrahydropteroyltri-L-glutamate + L-methionine. The protein operates within amino-acid biosynthesis; L-methionine biosynthesis via de novo pathway; L-methionine from L-homocysteine (MetE route): step 1/1. Its function is as follows. Catalyzes the transfer of a methyl group from 5-methyltetrahydrofolate to homocysteine resulting in methionine formation. This is 5-methyltetrahydropteroyltriglutamate--homocysteine methyltransferase from Neisseria meningitidis serogroup A / serotype 4A (strain DSM 15465 / Z2491).